Consider the following 450-residue polypeptide: Regulator of sigma E protease (450 aa).

Zn(2+) is bound at residue histidine 22. Glutamate 23 is a catalytic residue. Histidine 26 serves as a coordination point for Zn(2+). The helical transmembrane segment at 98-120 (AAIIAAGPVANFIFAIFAYWLVF) threads the bilayer. PDZ domains lie at 115–186 (AYWL…APFG) and 199–291 (HWAF…TPDT). 2 consecutive transmembrane segments (helical) span residues 376–398 (VIYYLMFLALISVNLGIINLFPL) and 426–445 (FSYRIGSILLVLLMGLALFN).

Belongs to the peptidase M50B family. In terms of assembly, interacts with RseA. Zn(2+) is required as a cofactor.

It localises to the cell inner membrane. A site-2 regulated intramembrane protease (S2P) that cleaves the peptide bond between 'Ala-108' and 'Cys-109' in the transmembrane region of RseA. Part of a regulated intramembrane proteolysis (RIP) cascade. Acts on DegS-cleaved RseA to release the cytoplasmic domain of RseA. This provides the cell with sigma-E (RpoE) activity through the proteolysis of RseA. In Salmonella typhi, this protein is Regulator of sigma E protease (rseP).